Consider the following 1113-residue polypeptide: Potassium channel subfamily U member 1 (1113 aa).

Residues Met-1 to Gln-24 lie on the Extracellular side of the membrane. A helical membrane pass occupies residues Ala-25–Phe-45. Residues Arg-46–Val-101 lie on the Cytoplasmic side of the membrane. Residues Gly-102–Ile-122 form a helical membrane-spanning segment. At Asn-123–Lys-137 the chain is on the extracellular side. A helical membrane pass occupies residues Ile-138 to Trp-158. Residues Ala-159–Lys-165 are Cytoplasmic-facing. Residues Phe-166–Tyr-186 form a helical membrane-spanning segment. Topologically, residues Tyr-187–Leu-188 are extracellular. The chain crosses the membrane as a helical; Voltage-sensor span at residues Lys-189–Ile-209. Residues Leu-210–Lys-226 lie on the Cytoplasmic side of the membrane. The chain crosses the membrane as a helical span at residues Leu-227–Asn-247. Residues Ser-248–Gln-259 lie on the Extracellular side of the membrane. An intramembrane region (pore-forming) is located at residues Thr-260–Val-282. Residues Val-283–Arg-290 lie on the Extracellular side of the membrane. Residues Ile-291–Met-311 form a helical membrane-spanning segment. Topologically, residues Val-312–Lys-1113 are cytoplasmic. RCK N-terminal domains are found at residues Lys-331–Ile-473 and Gln-710–Ile-881. Over residues Ala-1047–Pro-1081 the composition is skewed to polar residues. The disordered stretch occupies residues Ala-1047–Pro-1091.

The protein belongs to the potassium channel family. Calcium-activated (TC 1.A.1.3) subfamily. KCa1.1/KCNMA1 sub-subfamily. Homotetramer; which constitutes the activated potassium channel. Interacts with LRRC52; this interaction changes channel gating properties, such as shifting gating to more negative potentials at a given pH.

The protein localises to the cell membrane. It is found in the cell projection. Its subcellular location is the cilium. It localises to the flagellum membrane. It carries out the reaction K(+)(in) = K(+)(out). Its activity is regulated as follows. Regulated by changes in cytosolic pH; activated by alkalization. Not activated by intracellular Ca(2+). VU0546110 acts as a selective inhibitor. The auxiliary subunit LRRC52 shifts the activation of KCNU1 to more negative potentials at a given pH. Testis-specific potassium channel activated by both intracellular pH and membrane voltage that mediates export of K(+). Represents the primary spermatozoan K(+) current. The channel underlies a pH-triggered membrane hyperpolarization during the process of sperm capacitation, as sperm encounter the alkaline environment near the ovum in the female reproductive tract, thereby playing an essential for male fertility. This chain is Potassium channel subfamily U member 1 (Kcnu1), found in Rattus norvegicus (Rat).